The following is a 141-amino-acid chain: Nucleoside diphosphate kinase (141 aa).

The ATP site is built by Lys-11, Phe-59, Arg-87, Thr-93, Arg-104, and Asn-114. The Pros-phosphohistidine intermediate role is filled by His-117.

This sequence belongs to the NDK family. As to quaternary structure, homotetramer. It depends on Mg(2+) as a cofactor.

The protein localises to the cytoplasm. The enzyme catalyses a 2'-deoxyribonucleoside 5'-diphosphate + ATP = a 2'-deoxyribonucleoside 5'-triphosphate + ADP. The catalysed reaction is a ribonucleoside 5'-diphosphate + ATP = a ribonucleoside 5'-triphosphate + ADP. In terms of biological role, major role in the synthesis of nucleoside triphosphates other than ATP. The ATP gamma phosphate is transferred to the NDP beta phosphate via a ping-pong mechanism, using a phosphorylated active-site intermediate. The polypeptide is Nucleoside diphosphate kinase (Bdellovibrio bacteriovorus (strain ATCC 15356 / DSM 50701 / NCIMB 9529 / HD100)).